We begin with the raw amino-acid sequence, 443 residues long: MAQFYSPNRRVTTKQTLTVTVNSLDPFGQGVAHHQGKAIFIPGALPGEQAEIELTEQKRQYSRGKLKRLLNRCNERVVPACPHFGICGGCQQQHANSQLQQMSKADSLQRLIMREAGACPQLDPVICGSEYGYRRRARLGLLYQPKQHRLQMGFRQTESHDLVCIKHCPVLRPELERLLLPLYQCLSGLQAVRRLGHVELVLADNGPLMVLRHLDTLKEVDRAALIDFAKREQVAVYLAGDSDNVEKLIGEEPYYQIEGLRLAFHPRDFIQVNDTVNQQMVAQAIAWLDVQPDERVLDLFCGMGNFTLPLAKLAREVVGVEGVAALVANGQYNALNNALPNVSFFHENLESDISRQPWATQGFDKVLLDPARAGAAGVMSHIVKLAPKRVVYVSCNPTTLARDSQVLLAAGYRLAQVRMLDMFPHTGHLESMALFMQEPGVAK.

Residues arginine 10–arginine 68 form the TRAM domain. Residues cysteine 81, cysteine 87, cysteine 90, and cysteine 168 each contribute to the [4Fe-4S] cluster site. S-adenosyl-L-methionine contacts are provided by glutamine 271, phenylalanine 300, asparagine 305, glutamate 321, asparagine 348, and aspartate 369. Cysteine 395 serves as the catalytic Nucleophile.

It belongs to the class I-like SAM-binding methyltransferase superfamily. RNA M5U methyltransferase family. RlmD subfamily.

It carries out the reaction uridine(1939) in 23S rRNA + S-adenosyl-L-methionine = 5-methyluridine(1939) in 23S rRNA + S-adenosyl-L-homocysteine + H(+). In terms of biological role, catalyzes the formation of 5-methyl-uridine at position 1939 (m5U1939) in 23S rRNA. The polypeptide is 23S rRNA (uracil(1939)-C(5))-methyltransferase RlmD (Yersinia enterocolitica serotype O:8 / biotype 1B (strain NCTC 13174 / 8081)).